A 233-amino-acid chain; its full sequence is 2,3-bisphosphoglycerate-dependent phosphoglycerate mutase (233 aa).

Residues 8–15 (RHGESEWN), 21–22 (TG), Arg-60, 87–90 (ERHY), Lys-98, 114–115 (RR), and 183–184 (GN) contribute to the substrate site. The Tele-phosphohistidine intermediate role is filled by His-9. The active-site Proton donor/acceptor is the Glu-87.

This sequence belongs to the phosphoglycerate mutase family. BPG-dependent PGAM subfamily.

It catalyses the reaction (2R)-2-phosphoglycerate = (2R)-3-phosphoglycerate. The protein operates within carbohydrate degradation; glycolysis; pyruvate from D-glyceraldehyde 3-phosphate: step 3/5. Its function is as follows. Catalyzes the interconversion of 2-phosphoglycerate and 3-phosphoglycerate. This chain is 2,3-bisphosphoglycerate-dependent phosphoglycerate mutase, found in Lactococcus lactis subsp. cremoris (strain MG1363).